A 553-amino-acid chain; its full sequence is MMPTPVILLKEGTDTSQGIPQLVSNINACQVIAEAVRTTLGPRGMDKLIVDDRGKATISNDGATILKLLDVVHPAAKTLVDIAKSQDAEVGDGTTSVTLLAAEFLKQVKPYVEEGLHPQIIIRAFRTATQLAVNKIKDIAVSVKKEDKDEQRSLLEKCAATALSSKLISQSKEFFSKMVVDAVMMLDDLLQLKMIGIKKVQGGALEDSQLVAGVAFKKTFSYAGFEMQPKKYQSPKIALLNVELELKAEKDNAEVRVNTVEDYQAIVDAEWNILYDKLDKIHKSGAKVVLSKLPIGDVATQYFADRDMFCAGRVPEEDLKRTMMACGGSIQTSVNALSDDVLGRCELFEEIQIGGDRYNFFTGCPKAKTCTIILRGGAEQFMEETERSLHDAIMIVRRAIKNDSVVAGGGAIEMELSKYLRDYSRTIPGKQQLLIGAYAKALEIIPRQLCDNAGFDATNILNKLRAKHAQGGMWYGVDVNNEDIADNFEACVWEPAIVRINALTAASEAACLIVSVDETIKNPRSTVDAPPGGRGRGRGQTPQPLRPRSVALS.

Position 41 (glycine 41) interacts with ADP. An ATP-binding site is contributed by glycine 41. Aspartate 92 contributes to the Mg(2+) binding site. Glycine 93, threonine 94, threonine 95, serine 96, serine 164, and serine 165 together coordinate ADP. Position 93 (glycine 93) interacts with ATP. Position 96 (serine 96) interacts with ATP. ATP contacts are provided by arginine 398 and glycine 409. Residues glycine 409, glutamate 494, and arginine 499 each contribute to the ADP site. Arginine 499 is an ATP binding site. Positions 523 to 553 (PRSTVDAPPGGRGRGRGQTPQPLRPRSVALS) are disordered. The segment covering 539-553 (GQTPQPLRPRSVALS) has biased composition (low complexity).

As to quaternary structure, component of the chaperonin-containing T-complex (TRiC), a hexadecamer composed of two identical back-to-back stacked rings enclosing a protein folding chamber. Each ring is made up of eight different subunits: TCP1/CCT1, CCT2, CCT3, CCT4, CCT5, CCT6A/CCT6, CCT7, CCT8.

The protein resides in the cytoplasm. The catalysed reaction is ATP + H2O = ADP + phosphate + H(+). Its function is as follows. Component of the chaperonin-containing T-complex (TRiC), a molecular chaperone complex that assists the folding of actin, tubulin and other proteins upon ATP hydrolysis. In Gallus gallus (Chicken), this protein is T-complex protein 1 subunit eta.